We begin with the raw amino-acid sequence, 102 residues long: Small ribosomal subunit protein uS10 (102 aa).

Belongs to the universal ribosomal protein uS10 family. In terms of assembly, part of the 30S ribosomal subunit.

In terms of biological role, involved in the binding of tRNA to the ribosomes. In Cupriavidus metallidurans (strain ATCC 43123 / DSM 2839 / NBRC 102507 / CH34) (Ralstonia metallidurans), this protein is Small ribosomal subunit protein uS10.